The primary structure comprises 406 residues: Homocysteine-responsive endoplasmic reticulum-resident ubiquitin-like domain member 2 protein (406 aa).

The Ubiquitin-like domain maps to 10 to 89 (VTLIIKAPNQ…HMVHLVCTSR (80 aa)). The disordered stretch occupies residues 86–156 (CTSRTPPSSP…PQAQTDPAQS (71 aa)). Low complexity-rich tracts occupy residues 87–98 (TSRTPPSSPKSS) and 109–139 (SNSN…SSSE). The segment covering 145 to 156 (TLPQAQTDPAQS) has biased composition (polar residues). The chain crosses the membrane as a helical span at residues 302 to 322 (FIMVMGAMLLVYLHQAGWFPF).

The protein localises to the membrane. Could be involved in the unfolded protein response (UPR) pathway. This is Homocysteine-responsive endoplasmic reticulum-resident ubiquitin-like domain member 2 protein (HERPUD2) from Bos taurus (Bovine).